Consider the following 219-residue polypeptide: Adenylate kinase (219 aa).

10–15 (GAGKGT) serves as a coordination point for ATP. The NMP stretch occupies residues 30–59 (STGDMLRAAIREGTELGLKAKSVMESGGLV). AMP-binding positions include T31, R36, 57–59 (GLV), 85–88 (GFPR), and Q92. Residues 122–159 (GRRQHPASGRVYHIEYNPPKVEGKDDVTGEELVQRPDD) form an LID region. ATP-binding positions include R123 and 132-133 (VY). AMP-binding residues include R156 and R167. An ATP-binding site is contributed by R202.

The protein belongs to the adenylate kinase family. Monomer.

Its subcellular location is the cytoplasm. The enzyme catalyses AMP + ATP = 2 ADP. Its pathway is purine metabolism; AMP biosynthesis via salvage pathway; AMP from ADP: step 1/1. Functionally, catalyzes the reversible transfer of the terminal phosphate group between ATP and AMP. Plays an important role in cellular energy homeostasis and in adenine nucleotide metabolism. The protein is Adenylate kinase of Acinetobacter baylyi (strain ATCC 33305 / BD413 / ADP1).